A 288-amino-acid chain; its full sequence is MRGIILAGGSGTRLHPLTIGVSKQLLPVYDKPLVYYPLSTLIMAGIRDILVITTPADAPAFRRLLGDGSDFGVNLSYAAQNEPEGLAQAFLIGADHIGNDTVALALGDNIFYGPGLGTSLRRFEHVSGGAIFAYWVANPSAYGVVEFDADGKAVSLEEKPKTPKSHYAVPGLYFYDNTVIDIARSLKKSARGEYEITEVNQIYLNRGQLSVEVLARGTAWLDTGTFDSLLDASDFVRTIELRQGLKVGAPEEIAWRAGFIDDDQLATRAKELLKSGYGHYLLQLLDRE.

A dTDP-alpha-D-glucose-binding site is contributed by Gly8. Residues Gly8, Gly11, Thr12, Arg13, Lys23, Gln24, Gln80, Gly85, and Asp108 each coordinate dTTP. DTDP-alpha-D-glucose contacts are provided by Lys23, Gln24, Gln80, Gly85, Asp108, Asn109, Gly143, Glu158, Lys159, Val169, and Asp222. Asp108 serves as a coordination point for Mg(2+). Asp222 provides a ligand contact to Mg(2+).

This sequence belongs to the glucose-1-phosphate thymidylyltransferase family. Mg(2+) serves as cofactor.

It catalyses the reaction dTTP + alpha-D-glucose 1-phosphate + H(+) = dTDP-alpha-D-glucose + diphosphate. The protein operates within carbohydrate biosynthesis; dTDP-L-rhamnose biosynthesis. Its function is as follows. Catalyzes the conversion of glucose-1-phosphate and dTTP to dTDP-glucose and pyrophosphate. Involved in the biosynthesis of the dTDP-L-rhamnose which is a component of the critical linker, D-N-acetylglucosamine-L-rhamnose disaccharide, which connects the galactan region of arabinogalactan to peptidoglycan via a phosphodiester linkage. This is Glucose-1-phosphate thymidylyltransferase (rmlA) from Mycolicibacterium smegmatis (strain ATCC 700084 / mc(2)155) (Mycobacterium smegmatis).